Here is a 614-residue protein sequence, read N- to C-terminus: Sodium- and chloride-dependent betaine transporter (614 aa).

The Cytoplasmic segment spans residues 1–44 (MDRKVAVHEDGYPVVSWVPEEGEMMDQKGKDQVKDRGQWTNKME). Helical transmembrane passes span 45-65 (FVLSVAGEIIGLGNVWRFPYL), 73-92 (AFFIPYFIFFFSCGIPVFFL), and 117-137 (GIGMASVVIESYLNIYYIIIL). The Extracellular segment spans residues 138-210 (AWALFYLFSS…SGIHDLGSLR (73 aa)). Cysteine 157 and cysteine 166 are disulfide-bonded. 2 N-linked (GlcNAc...) asparagine glycosylation sites follow: asparagine 171 and asparagine 183. Transmembrane regions (helical) follow at residues 211–229 (WELALCLLLAWIICYFCIW), 238–255 (VVYFTATFPYLMLIILLI), 291–308 (IFFSFAICQGCLTALGSY), 320–341 (IALCFLNSATSFVAGFVVFSIL), 374–393 (MPLSQLWSCLFFIMLLFLGL), 423–441 (VLILAISVLCYLMGLLLVT), 458–478 (GICLLFLSLFEVICIGWVYGA), 499–518 (ISWLFLTPGLCLATFFFSLS), and 538–556 (IGWLLAFSSMACVPLFIII). The Cytoplasmic portion of the chain corresponds to 557 to 614 (TFLKTQGSFKKRLRRLITPDPSLPQPGRRPPQDGSSAQNCSSSPAKQELIAWEKETHL). Positions 574-602 (TPDPSLPQPGRRPPQDGSSAQNCSSSPAK) are disordered. The span at 589–601 (DGSSAQNCSSSPA) shows a compositional bias: polar residues.

The protein belongs to the sodium:neurotransmitter symporter (SNF) (TC 2.A.22) family. SLC6A12 subfamily. As to quaternary structure, interacts with LIN7C. In terms of tissue distribution, predominantly expressed in the liver (sinusoidal hepatocyte plasma membranes), also present in the renal medulla, where it localizes to the basolateral membranes of collecting ducts (particularly at the papilla tip) and the thick ascending limbs of Henle (at protein level). Some expression is detected in the leptomeninges, but no expression is detected in brain parenchyma, brain blood vessels, ependymal cells, the renal cortex and the intestine.

It localises to the basolateral cell membrane. It is found in the cell membrane. The enzyme catalyses 4-aminobutanoate(out) + chloride(out) + 3 Na(+)(out) = 4-aminobutanoate(in) + chloride(in) + 3 Na(+)(in). The catalysed reaction is glycine betaine(out) + 2 chloride(out) + 3 Na(+)(out) = glycine betaine(in) + 2 chloride(in) + 3 Na(+)(in). Its function is as follows. Transporter that mediates cellular uptake of betaine and GABA in a sodium- and chloride-dependent process. May have a role in regulation of GABAergic transmission in the brain through the reuptake of GABA into presynaptic terminals, as well as in osmotic regulation. Probably also involved in renal and hepatic osmotic regulation. The protein is Sodium- and chloride-dependent betaine transporter (Slc6a12) of Mus musculus (Mouse).